Reading from the N-terminus, the 939-residue chain is Translation initiation factor IF-2 (939 aa).

Residues 48-355 form a disordered region; sequence KFAPAPKVEN…KPEKKEKEEE (308 aa). A compositionally biased stretch (low complexity) spans 79–93; sequence QQNQAPKQPQQGTQN. Basic and acidic residues predominate over residues 114–130; sequence SRDKNSRRDNNNRDGQR. Residues 131 to 257 are compositionally biased toward low complexity; the sequence is DNNGGYRNND…NNDRNNNGGF (127 aa). Residues 287–355 show a composition bias toward basic and acidic residues; it reads RNNDRRDSAP…KPEKKEKEEE (69 aa). The tr-type G domain maps to 440 to 609; the sequence is PRPPVVCVMG…LLTAEVNELK (170 aa). The G1 stretch occupies residues 449 to 456; it reads GHVDHGKT. Position 449-456 (449-456) interacts with GTP; it reads GHVDHGKT. Residues 474 to 478 are G2; that stretch reads GITQK. Positions 495 to 498 are G3; the sequence is DTPG. GTP contacts are provided by residues 495–499 and 549–552; these read DTPGH and NKID. A G4 region spans residues 549–552; sequence NKID. The interval 585–587 is G5; that stretch reads SAH.

This sequence belongs to the TRAFAC class translation factor GTPase superfamily. Classic translation factor GTPase family. IF-2 subfamily.

The protein resides in the cytoplasm. Functionally, one of the essential components for the initiation of protein synthesis. Protects formylmethionyl-tRNA from spontaneous hydrolysis and promotes its binding to the 30S ribosomal subunits. Also involved in the hydrolysis of GTP during the formation of the 70S ribosomal complex. This is Translation initiation factor IF-2 from Lachnospira eligens (strain ATCC 27750 / DSM 3376 / VPI C15-48 / C15-B4) (Eubacterium eligens).